A 344-amino-acid chain; its full sequence is Protein RecA (344 aa).

66–73 (GPESSGKT) serves as a coordination point for ATP.

This sequence belongs to the RecA family.

Its subcellular location is the cytoplasm. Functionally, can catalyze the hydrolysis of ATP in the presence of single-stranded DNA, the ATP-dependent uptake of single-stranded DNA by duplex DNA, and the ATP-dependent hybridization of homologous single-stranded DNAs. It interacts with LexA causing its activation and leading to its autocatalytic cleavage. The sequence is that of Protein RecA from Methylobacillus flagellatus (strain ATCC 51484 / DSM 6875 / VKM B-1610 / KT).